Here is a 715-residue protein sequence, read N- to C-terminus: MPAESGKRFKPSKYVPVSAAAIFLVGATTLFFAFTCPGLSLDVSPAVPIYNAIMFLFVLANFSMATFMDPGIFPRAEEDEDKEDDFRAPLYKTVEIKGIQVRMKWCATCRFYRPPRCSHCSVCDNCVEEFDHHCPWVNNCIGRRNYRYFFLFLLSLTAHIMGVFGFGLLYVLCHIEELSGVRTAVTMAVMCVAGLFFIPVAGLTGFHVVLVARGRTTNEQVTGKFRGGVNPFTNGCCNNVSRVLCSSPAPRYLGRPKKEKTIVIRPPFLRPEVSDGQITVKIMDNGIQGELRRTKSKGSLEITESQSADAEPPPPPKPDLSRYTGLRTHLSLATNEDSSLLGKDSPPTPTMYKYRPGYSSSSTSAAMPHSSSAKLSRGDSLKEPTSIADSSRHPSYRSEPSLEPESFRSPTFGKSFHFDPLSSGSRSSSLKSAQGTGFELGQLQSIRSEGTTSTSYKSLANQTRNGSLSYDSLLTPSDSPDFESVQAGPEPDPPLGYTSPFLSARLAQQREAERHPRLLPTGPPHREPSPVRYDNLSRHIVASLQEREKLLRQSPPLAGREEEPGLGDSGIQSTPGSGHAPRTSSSSDDSKRSPLSKTPLGRPAVPRFGKPDGLRGRGLGSPEPGTTAPYLGRSMSYSSQKAPSGVSETEEVALQPLLTPKDEVQLKTTYSKSNGQPKSIGSASPGPGQPPLSSPTRGGVKKVSGVGGTTYEISV.

Residues 1–13 (MPAESGKRFKPSK) are Cytoplasmic-facing. Residues 14–34 (YVPVSAAAIFLVGATTLFFAF) form a helical membrane-spanning segment. At 35–52 (TCPGLSLDVSPAVPIYNA) the chain is on the extracellular side. The helical transmembrane segment at 53–73 (IMFLFVLANFSMATFMDPGIF) threads the bilayer. Topologically, residues 74 to 148 (PRAEEDEDKE…NCIGRRNYRY (75 aa)) are cytoplasmic. The residue at position 91 (tyrosine 91) is a Phosphotyrosine. A DHHC domain is found at 104–154 (KWCATCRFYRPPRCSHCSVCDNCVEEFDHHCPWVNNCIGRRNYRYFFLFLL). Cysteine 134 functions as the S-palmitoyl cysteine intermediate in the catalytic mechanism. Residues 149–169 (FFLFLLSLTAHIMGVFGFGLL) form a helical membrane-spanning segment. The Extracellular segment spans residues 170–191 (YVLCHIEELSGVRTAVTMAVMC). A helical membrane pass occupies residues 192–212 (VAGLFFIPVAGLTGFHVVLVA). At 213-715 (RGRTTNEQVT…VGGTTYEISV (503 aa)) the chain is on the cytoplasmic side. Serine 247 is modified (phosphoserine). The disordered stretch occupies residues 289–715 (GELRRTKSKG…VGGTTYEISV (427 aa)). The residue at position 294 (threonine 294) is a Phosphothreonine. A phosphoserine mark is found at serine 296 and serine 299. Threonine 303 carries the post-translational modification Phosphothreonine. Position 345 is a phosphoserine (serine 345). 2 positions are modified to phosphothreonine: threonine 348 and threonine 350. Residues 359–373 (SSSSTSAAMPHSSSA) are compositionally biased toward low complexity. Residues serine 380, serine 398, serine 406, and serine 409 each carry the phosphoserine modification. Position 411 is a phosphothreonine (threonine 411). Phosphoserine is present on residues serine 415, serine 425, serine 429, and serine 432. Residues 422-432 (SSGSRSSSLKS) show a composition bias toward low complexity. Threonine 436 is subject to Phosphothreonine. A compositionally biased stretch (polar residues) spans 442-478 (QLQSIRSEGTTSTSYKSLANQTRNGSLSYDSLLTPSD). A phosphoserine mark is found at serine 529 and serine 554. The span at 581–597 (PRTSSSSDDSKRSPLSK) shows a compositional bias: low complexity. An Omega-N-methylarginine modification is found at arginine 617. Serine 621 is modified (phosphoserine). Threonine 659 is modified (phosphothreonine). The span at 666 to 677 (LKTTYSKSNGQP) shows a compositional bias: polar residues. 2 positions are modified to phosphoserine: serine 684 and serine 694. An Omega-N-methylarginine modification is found at arginine 697.

This sequence belongs to the DHHC palmitoyltransferase family. ERF2/ZDHHC9 subfamily. Autopalmitoylated. Palmitoylation of the C-terminal tail regulates stimulation-dependent plasma membrane motility. Post-translationally, phosphorylation regulates association with endocytic proteins and its subcellular localization. Phosphorylation by LYN during fatty acid uptake leads to inactivation of the activity.

The protein localises to the cell membrane. It catalyses the reaction L-cysteinyl-[protein] + hexadecanoyl-CoA = S-hexadecanoyl-L-cysteinyl-[protein] + CoA. Palmitoyltransferase that catalyzes the addition of palmitate onto various protein substrates such as CTNND2, CD36, GSDMD, NLRP3, NOD1, NOD2, STAT3 and S1PR1 thus plays a role in various biological processes including cell adhesion, inflammation, fatty acid uptake, bacterial sensing or cardiac functions. Plays an important role in the regulation of synapse efficacy by mediating palmitoylation of delta-catenin/CTNND2, thereby increasing synaptic delivery and surface stabilization of alpha-amino-3-hydroxy-5-methyl-4-isoxazole propionic acid receptors (AMPARs). Under basal conditions, remains at the synaptic membrane through FYN-mediated phosphorylation that prevents association with endocytic proteins. Neuronal activity enhances the internalization and trafficking of DHHC5 from spines to dendritic shafts where it palmitoylates delta-catenin/CTNND2. Regulates cell adhesion at the plasma membrane by palmitoylating GOLGA7B and DSG2. Plays a role in innate immune response by mediating the palmitoylation of NOD1 and NOD2 and their proper recruitment to the bacterial entry site and phagosomes. Also participates in fatty acid uptake by palmitoylating CD36 and thereby targeting it to the plasma membrane. Upon binding of fatty acids to CD36, gets phosphorylated by LYN leading to inactivation and subsequent CD36 caveolar endocytosis. Controls oligodendrocyte development by catalyzing STAT3 palmitoylation. Acts as a regulator of inflammatory response by mediating palmitoylation of NLRP3 and GSDMD. Palmitoylates NLRP3 to promote inflammasome assembly and activation. Activates pyroptosis by catalyzing palmitoylation of gasdermin-D (GSDMD), thereby promoting membrane translocation and pore formation of GSDMD. The chain is Palmitoyltransferase ZDHHC5 (Zdhhc5) from Rattus norvegicus (Rat).